The sequence spans 623 residues: V-type proton ATPase catalytic subunit A (623 aa).

Gly-252–Thr-259 is a binding site for ATP.

Belongs to the ATPase alpha/beta chains family. In terms of assembly, V-ATPase is a heteromultimeric enzyme composed of a peripheral catalytic V1 complex (main components: subunits A, B, C, D, E, and F) attached to an integral membrane V0 proton pore complex (main component: the proteolipid protein).

The enzyme catalyses ATP + H2O + 4 H(+)(in) = ADP + phosphate + 5 H(+)(out). In terms of biological role, catalytic subunit of the peripheral V1 complex of vacuolar ATPase. V-ATPase vacuolar ATPase is responsible for acidifying a variety of intracellular compartments in eukaryotic cells. This Daucus carota (Wild carrot) protein is V-type proton ATPase catalytic subunit A.